Consider the following 290-residue polypeptide: Transcription factor HES-1 (290 aa).

Positions 1-47 (MPADTGMEKPTASPIAGAPASASHTPDKPRSASEHRKSSKPIMEKRR) are disordered. A compositionally biased stretch (low complexity) spans 10–23 (PTASPIAGAPASAS). Residues 25 to 36 (TPDKPRSASEHR) show a composition bias toward basic and acidic residues. The region spanning 35 to 92 (HRKSSKPIMEKRRRARINESLGQLKMLILDALKKDSSRHSKLEKADILEMTVKHLRNL) is the bHLH domain. The region spanning 111–144 (YRAGFNECMNEVTRFLSTCEGVNADVRARLLGHL) is the Orange domain. A WRPW motif motif is present at residues 287-290 (WRPW).

In terms of assembly, transcription repression requires formation of a complex with a corepressor protein of the Groucho/TLE family.

The protein localises to the nucleus. Its function is as follows. Transcriptional repressor of genes that require a bHLH protein for their transcription. May act as a negative regulator of myogenesis by inhibiting the functions of MYOD1 and ASH1. The sequence is that of Transcription factor HES-1 (HES1) from Gallus gallus (Chicken).